Reading from the N-terminus, the 697-residue chain is Hormonally up-regulated neu tumor-associated kinase homolog (697 aa).

A Protein kinase domain is found at 55-313 (YLIGRKLGEG…IQQALANRWL (259 aa)). Residues 61–69 (LGEGSFAKV) and Lys84 each bind ATP. Asp179 acts as the Proton acceptor in catalysis. 2 stretches are compositionally biased toward basic and acidic residues: residues 405–424 (KMNK…KRGE) and 460–473 (PVKE…ERES). Disordered regions lie at residues 405–480 (KMNK…LSPF) and 586–642 (DNTS…NCVR). Residues 586 to 600 (DNTSPIKGHSNQASF) are compositionally biased toward polar residues. The span at 607 to 626 (SPSSPESMSPTSPHSPHSPS) shows a compositional bias: low complexity. Over residues 627–637 (CNNNISGNLGS) the composition is skewed to polar residues.

It belongs to the protein kinase superfamily. CAMK Ser/Thr protein kinase family. SNF1 subfamily.

The enzyme catalyses L-seryl-[protein] + ATP = O-phospho-L-seryl-[protein] + ADP + H(+). The catalysed reaction is L-threonyl-[protein] + ATP = O-phospho-L-threonyl-[protein] + ADP + H(+). The chain is Hormonally up-regulated neu tumor-associated kinase homolog (hunk) from Xenopus tropicalis (Western clawed frog).